Reading from the N-terminus, the 246-residue chain is Phycobilisome rod-core linker polypeptide CpcG2 (246 aa).

One can recognise a PBS-linker domain in the interval 11–189 (SSQNQRVAGY…YWRDKLENSR (179 aa)). Residues 224–246 (DTTRRDRPTVPASINPTASFPLR) form a disordered region. Positions 235 to 246 (ASINPTASFPLR) are enriched in polar residues.

Belongs to the phycobilisome linker protein family. As to quaternary structure, the phycobilisome is a hemidiscoidal structure that is composed of two distinct substructures: a core complex and a number of rods radiating from the core.

It is found in the cellular thylakoid membrane. Rod-core linker protein required for attachment of phycocyanin to allophycocyanin in cores of phycobilisomes. In terms of biological role, linker polypeptides determine the state of aggregation and the location of the disk-shaped phycobiliprotein units within the phycobilisome and modulate their spectroscopic properties in order to mediate a directed and optimal energy transfer. The protein is Phycobilisome rod-core linker polypeptide CpcG2 (cpcG2) of Thermosynechococcus vestitus (strain NIES-2133 / IAM M-273 / BP-1).